Here is a 143-residue protein sequence, read N- to C-terminus: Small ribosomal subunit protein eS6 (143 aa).

It belongs to the eukaryotic ribosomal protein eS6 family.

In Methanoregula boonei (strain DSM 21154 / JCM 14090 / 6A8), this protein is Small ribosomal subunit protein eS6.